A 2547-amino-acid chain; its full sequence is Lovastatin diketide synthase mokB (2547 aa).

The region spanning 10 to 430 (PTPIAVVGMG…GANAHAIVER (421 aa)) is the Ketosynthase family 3 (KS3) domain. Catalysis depends on for beta-ketoacyl synthase activity residues cysteine 183, histidine 318, and histidine 353. Residues 545–890 (VFTGQGAQWF…MDLLQGGYPV (346 aa)) are acyl and malonyl transferase. Serine 635 (for malonyltransferase activity) is an active-site residue. The N-terminal hotdog fold stretch occupies residues 941–1079 (HDLIGVQEPL…GLIRAQVDHP (139 aa)). One can recognise a PKS/mFAS DH domain in the interval 941 to 1252 (HDLIGVQEPL…FQSLGAVISD (312 aa)). The active-site Proton acceptor; for dehydratase activity is histidine 973. The interval 973 to 985 (HVVGSRILFPGAG) is dehydratase-like. The segment at 1095 to 1252 (SRKMAPQDLW…FQSLGAVISD (158 aa)) is C-terminal hotdog fold. Aspartate 1160 functions as the Proton donor; for dehydratase activity in the catalytic mechanism. Cysteine 1340 and cysteine 1379 form a disulfide bridge. The segment at 1510 to 1547 (YDVVLACQVLHATSNMQRTLNNVRKLLKPGGKLILVET) is methyltransferase. The Carrier domain occupies 2459–2541 (ASTEEEATAL…EVAEVVVKKY (83 aa)). Position 2501 is an O-(pantetheine 4'-phosphoryl)serine (serine 2501).

Requires pantetheine 4'-phosphate as cofactor.

The catalysed reaction is holo-[2-methylbutanoate polyketide synthase] + 2 malonyl-CoA + S-adenosyl-L-methionine + 2 NADPH + 3 H(+) = (S)-2-methylbutanoyl-[2-methylbutanoate polyketide synthase] + S-adenosyl-L-homocysteine + 2 CO2 + 2 NADP(+) + 2 CoA + H2O. The protein operates within polyketide biosynthesis; lovastatin biosynthesis. Its function is as follows. Diketide synthase; part of the gene cluster that mediates the biosynthesis of monakolin K, also known as lovastatin, and which acts as a potent competitive inhibitor of HMG-CoA reductase. Monakolin K biosynthesis is performed in two stages. The first stage is catalyzed by the nonaketide synthase mokA, which belongs to type I polyketide synthases and catalyzes the iterative nine-step formation of the polyketide. This PKS stage completed by the action of dehydrogenase mokE, which catalyzes the NADPH-dependent reduction of the unsaturated tetra-, penta- and heptaketide intermediates that arise during the mokA-mediated biosynthesis of the nonaketide chain and leads to dihydromonacolin L. Covalently bound dihydromonacolin L is released from mokA by the mokD esterase. Conversion of dihydromonacolin L into monacolin L and then monacolin J is subsequently performed with the participation of molecular oxygen and P450 monoogygenase mokC. Finally, mokF performs the conversion of monacoline J to monacoline K through the addition of the side-chain diketide moiety (2R)-2-methylbutanoate produced by the diketide synthase mokB. In Monascus pilosus (Red mold), this protein is Lovastatin diketide synthase mokB.